We begin with the raw amino-acid sequence, 91 residues long: DNA-directed RNA polymerase subunit omega (91 aa).

It belongs to the RNA polymerase subunit omega family. As to quaternary structure, the RNAP catalytic core consists of 2 alpha, 1 beta, 1 beta' and 1 omega subunit. When a sigma factor is associated with the core the holoenzyme is formed, which can initiate transcription.

The catalysed reaction is RNA(n) + a ribonucleoside 5'-triphosphate = RNA(n+1) + diphosphate. In terms of biological role, promotes RNA polymerase assembly. Latches the N- and C-terminal regions of the beta' subunit thereby facilitating its interaction with the beta and alpha subunits. This Psychromonas ingrahamii (strain DSM 17664 / CCUG 51855 / 37) protein is DNA-directed RNA polymerase subunit omega.